The primary structure comprises 339 residues: D-erythrose-4-phosphate dehydrogenase (339 aa).

Residue 11 to 12 coordinates NAD(+); the sequence is RI. Residues 158–160, arginine 204, 217–218, and arginine 240 each bind substrate; these read SCT and TK. Cysteine 159 (nucleophile) is an active-site residue. Asparagine 322 lines the NAD(+) pocket.

Belongs to the glyceraldehyde-3-phosphate dehydrogenase family. Epd subfamily. Homotetramer.

The protein localises to the cytoplasm. The enzyme catalyses D-erythrose 4-phosphate + NAD(+) + H2O = 4-phospho-D-erythronate + NADH + 2 H(+). It participates in cofactor biosynthesis; pyridoxine 5'-phosphate biosynthesis; pyridoxine 5'-phosphate from D-erythrose 4-phosphate: step 1/5. Its function is as follows. Catalyzes the NAD-dependent conversion of D-erythrose 4-phosphate to 4-phosphoerythronate. This Aliivibrio salmonicida (strain LFI1238) (Vibrio salmonicida (strain LFI1238)) protein is D-erythrose-4-phosphate dehydrogenase.